The sequence spans 140 residues: Anti-sigma F factor (140 aa).

This sequence belongs to the anti-sigma-factor family.

It catalyses the reaction L-seryl-[protein] + ATP = O-phospho-L-seryl-[protein] + ADP + H(+). The catalysed reaction is L-threonyl-[protein] + ATP = O-phospho-L-threonyl-[protein] + ADP + H(+). Functionally, binds to sigma F and blocks its ability to form an RNA polymerase holoenzyme (E-sigma F). Phosphorylates SpoIIAA on a serine residue. This phosphorylation may enable SpoIIAA to act as an anti-anti-sigma factor that counteracts SpoIIAB and thus releases sigma F from inhibition. The protein is Anti-sigma F factor of Clostridium perfringens (strain ATCC 13124 / DSM 756 / JCM 1290 / NCIMB 6125 / NCTC 8237 / Type A).